The chain runs to 361 residues: [LysW]-lysine hydrolase (361 aa).

Residue H67 coordinates Zn(2+). The active site involves D69. D91 contributes to the Zn(2+) binding site. E124 functions as the Proton acceptor in the catalytic mechanism. Residues E125, E148, and H326 each coordinate Zn(2+).

It belongs to the peptidase M20A family. LysK subfamily. In terms of assembly, homotetramer and homooctamer. Zn(2+) serves as cofactor. The cofactor is Co(2+).

The protein localises to the cytoplasm. It carries out the reaction [amino-group carrier protein]-C-terminal-gamma-(L-lysyl)-L-glutamate + H2O = [amino-group carrier protein]-C-terminal-L-glutamate + L-lysine. It functions in the pathway amino-acid biosynthesis; L-lysine biosynthesis via AAA pathway; L-lysine from L-alpha-aminoadipate (Thermus route): step 5/5. In terms of biological role, catalyzes the release of L-lysine from [LysW]-gamma-L-lysine. In vitro, can deacetylate both N(2)-acetyl-L-lysine and N(2)-acetyl-L-ornithine. The chain is [LysW]-lysine hydrolase from Thermus thermophilus (strain ATCC BAA-163 / DSM 7039 / HB27).